Here is a 152-residue protein sequence, read N- to C-terminus: Regulatory protein RecX (152 aa).

Belongs to the RecX family.

The protein localises to the cytoplasm. Modulates RecA activity. The protein is Regulatory protein RecX of Haemophilus influenzae (strain PittEE).